We begin with the raw amino-acid sequence, 339 residues long: Cilia- and flagella-associated protein 36 (339 aa).

Coiled coils occupy residues 142–188 (ISDL…ENKQ) and 255–330 (NLSQ…EVIL). 2 disordered regions span residues 177 to 212 (NLTL…EKQP) and 281 to 318 (KKQE…QRRK). Residues 187 to 200 (KQSSGSERTPNNTE) are compositionally biased toward polar residues. The segment covering 281 to 313 (KKQESKKMAQNSEEHEEKATCSKQEMTEEEKKS) has biased composition (basic and acidic residues).

Belongs to the CFAP36 family.

Its subcellular location is the nucleus. The protein resides in the cytoplasm. The protein localises to the cell projection. It localises to the cilium. It is found in the flagellum. This chain is Cilia- and flagella-associated protein 36, found in Xenopus tropicalis (Western clawed frog).